The sequence spans 895 residues: Transcription factor SWI6 (895 aa).

Polar residues predominate over residues 1-45 (MASTVAGNSFVSQQHPGNLHSANLQSQSQGFRRQNSTSSVPSTAS). A disordered region spans residues 1 to 107 (MASTVAGNSF…SDQNVPQQPQ (107 aa)). Low complexity predominate over residues 64–100 (MSSQQSQPPASQQSFSMSQTGSQPQPSQSSFRSYSDQ). Residues 112 to 219 (IYTAVYSNVE…NRNPDGSVSQ (108 aa)) form the HTH APSES-type domain. The H-T-H motif DNA-binding region spans 143–164 (ATQILKVAGVEKGKRTKILEKE). 2 disordered regions span residues 272 to 293 (ARFDSPGPRGRNGPTRAPSFQR) and 323 to 358 (NMAFSAGSEPQPGGLNGTEPPRKRQRMDMTPANSFG). ANK repeat units follow at residues 458 to 488 (QCHTALHWAATLSRMTILRRLIEAGASPFRV) and 607 to 636 (AGDTALNIAARIGNRSIISQLLEVCASPHI). Positions 653–684 (SDGAMKTKGDSGGDVENGDVGGSSQKSNESSN) are disordered. Residues 674–684 (GSSQKSNESSN) show a composition bias toward polar residues. The stretch at 698–759 (SANFQEEIKN…VTNLQRAEER (62 aa)) forms a coiled coil.

The protein resides in the nucleus. In terms of biological role, transcription factor that plays a role downstream of the MCK1-MKK2-MPS1 cascade. Required for hyphal morphogenesis and pathogenicity. Is an important oxidative stress response regulator and plays a positive role in the regulation of extracellular peroxidases. The sequence is that of Transcription factor SWI6 from Pyricularia oryzae (strain 70-15 / ATCC MYA-4617 / FGSC 8958) (Rice blast fungus).